The following is a 186-amino-acid chain: Single-stranded DNA-binding protein 1 (186 aa).

The SSB domain maps to 1 to 108 (MDATVTVVGN…LEIDEIGPTL (108 aa)). The interval 119-186 (TQAGHGVSPD…EDFDSDEVPF (68 aa)) is disordered. Over residues 175–186 (SYEDFDSDEVPF) the composition is skewed to acidic residues.

As to quaternary structure, homotetramer.

The chain is Single-stranded DNA-binding protein 1 (ssb1) from Tropheryma whipplei (strain Twist) (Whipple's bacillus).